A 180-amino-acid polypeptide reads, in one-letter code: MNIIQQLEAEQAATIEAKRTLPEFSPGDTLRVNVRVTEGNRTRVQAYEGVCIARSGGSINESFTVRKISYGEGVERVFPVYSPLVESVEVVRRGKVRRAKLYYLRDRRGKSARIVENTGTRARKLNDSERAALAEEKARLEAEKVAAAQALAAEKAAAEAAEKAAAAEAEAAKAAEGSAE.

This sequence belongs to the bacterial ribosomal protein bL19 family.

In terms of biological role, this protein is located at the 30S-50S ribosomal subunit interface and may play a role in the structure and function of the aminoacyl-tRNA binding site. The sequence is that of Large ribosomal subunit protein bL19 from Allorhizobium ampelinum (strain ATCC BAA-846 / DSM 112012 / S4) (Agrobacterium vitis (strain S4)).